Here is a 53-residue protein sequence, read N- to C-terminus: UPF0391 membrane protein PSEEN0090 (53 aa).

2 helical membrane-spanning segments follow: residues 4–24 and 29–49; these read WAITFLIIAIVAAVLGFGGIA and GIAKILFIIFLVLFVASFFFG.

The protein belongs to the UPF0391 family.

The protein localises to the cell membrane. The protein is UPF0391 membrane protein PSEEN0090 of Pseudomonas entomophila (strain L48).